The sequence spans 64 residues: Prokaryotic ubiquitin-like protein Pup (64 aa).

Residues 1 to 37 (MAQEQTQRAGGGEDDETTGGDGSAGQERREKLAAETD) form a disordered region. Residues 21–58 (DGSAGQERREKLAAETDDLLDEIDDVLEENAEDFVRAY) are ARC ATPase binding. Residues 24-52 (AGQERREKLAAETDDLLDEIDDVLEENAE) are a coiled coil. Q64 carries the post-translational modification Deamidated glutamine. Q64 participates in a covalent cross-link: Isoglutamyl lysine isopeptide (Gln-Lys) (interchain with K-? in acceptor proteins).

It belongs to the prokaryotic ubiquitin-like protein family. As to quaternary structure, strongly interacts with the proteasome-associated ATPase ARC through a hydrophobic interface; the interacting region of Pup lies in its C-terminal half. There is one Pup binding site per ARC hexamer ring. Post-translationally, is modified by deamidation of its C-terminal glutamine to glutamate by the deamidase Dop, a prerequisite to the subsequent pupylation process.

It functions in the pathway protein degradation; proteasomal Pup-dependent pathway. Its function is as follows. Protein modifier that is covalently attached to lysine residues of substrate proteins, thereby targeting them for proteasomal degradation. The tagging system is termed pupylation. The protein is Prokaryotic ubiquitin-like protein Pup of Rhodococcus erythropolis (strain PR4 / NBRC 100887).